We begin with the raw amino-acid sequence, 53 residues long: Lectin alpha chain (53 aa).

The protein belongs to the leguminous lectin family. In terms of assembly, tetramer of two alpha and two beta chains.

The protein is Lectin alpha chain of Lathyrus clymenum (Spanish vetchling).